The primary structure comprises 229 residues: Lipoprotein-releasing system ATP-binding protein LolD (229 aa).

Residues 6–226 (LELKSVDRHY…TLSDGRVVEL (221 aa)) form the ABC transporter domain. Residue 42 to 49 (APSGTGKS) participates in ATP binding.

The protein belongs to the ABC transporter superfamily. Lipoprotein translocase (TC 3.A.1.125) family. In terms of assembly, the complex is composed of two ATP-binding proteins (LolD) and two transmembrane proteins (LolC and LolE).

It is found in the cell inner membrane. In terms of biological role, part of the ABC transporter complex LolCDE involved in the translocation of mature outer membrane-directed lipoproteins, from the inner membrane to the periplasmic chaperone, LolA. Responsible for the formation of the LolA-lipoprotein complex in an ATP-dependent manner. This chain is Lipoprotein-releasing system ATP-binding protein LolD, found in Chelativorans sp. (strain BNC1).